We begin with the raw amino-acid sequence, 726 residues long: Transferrin (726 aa).

Positions 1-16 are cleaved as a signal peptide; sequence MLLCLTLLFSASAVLA. Transferrin-like domains are found at residues 29-367 and 374-719; these read YKVC…ERDT and VRFC…VIRA. Intrachain disulfides connect Cys32/Cys63 and Cys41/Cys54. Residues Asp78 and Tyr111 each coordinate Fe(3+). Disulfide bonds link Cys135-Cys231, Cys184-Cys210, Cys207-Cys216, and Cys274-Cys287. Residues Thr137, Arg141, Val143, and Gly144 each coordinate hydrogencarbonate. A glycan (N-linked (GlcNAc...) asparagine) is linked at Asn162. Residue Tyr225 coordinates Fe(3+). 2 N-linked (GlcNAc...) asparagine glycosylation sites follow: Asn337 and Asn358. Cystine bridges form between Cys377–Cys414 and Cys387–Cys405. The Fe(3+) site is built by Asp429 and Tyr457. Cysteines 481 and 562 form a disulfide. Hydrogencarbonate is bound by residues Thr483, Arg487, Ala489, and Gly490. Fe(3+) contacts are provided by Tyr573 and His642.

This sequence belongs to the transferrin family.

It is found in the secreted. Transferrins are iron binding transport proteins which bind Fe(3+) ion in association with the binding of an anion, usually bicarbonate. The chain is Transferrin from Blaberus discoidalis (Tropical cockroach).